The primary structure comprises 750 residues: Photosystem I P700 chlorophyll a apoprotein A1 (750 aa).

Transmembrane regions (helical) follow at residues Val70–Ala93, Leu156–His179, Leu195–Leu219, Ile291–Tyr309, Trp346–Tyr369, Leu385–Val411, Ala433–His455, and Phe531–Leu549. Positions 573 and 582 each coordinate [4Fe-4S] cluster. 2 consecutive transmembrane segments (helical) span residues His589–Trp610 and Leu664–Phe686. His675 is a chlorophyll a' binding site. Residues Met683 and Tyr691 each contribute to the chlorophyll a site. Phylloquinone is bound at residue Trp692. A helical membrane pass occupies residues Ala724–Ala744.

Belongs to the PsaA/PsaB family. As to quaternary structure, the PsaA/B heterodimer binds the P700 chlorophyll special pair and subsequent electron acceptors. PSI consists of a core antenna complex that captures photons, and an electron transfer chain that converts photonic excitation into a charge separation. The eukaryotic PSI reaction center is composed of at least 11 subunits. P700 is a chlorophyll a/chlorophyll a' dimer, A0 is one or more chlorophyll a, A1 is one or both phylloquinones and FX is a shared 4Fe-4S iron-sulfur center. serves as cofactor.

The protein localises to the plastid. It localises to the chloroplast thylakoid membrane. The enzyme catalyses reduced [plastocyanin] + hnu + oxidized [2Fe-2S]-[ferredoxin] = oxidized [plastocyanin] + reduced [2Fe-2S]-[ferredoxin]. Its function is as follows. PsaA and PsaB bind P700, the primary electron donor of photosystem I (PSI), as well as the electron acceptors A0, A1 and FX. PSI is a plastocyanin-ferredoxin oxidoreductase, converting photonic excitation into a charge separation, which transfers an electron from the donor P700 chlorophyll pair to the spectroscopically characterized acceptors A0, A1, FX, FA and FB in turn. Oxidized P700 is reduced on the lumenal side of the thylakoid membrane by plastocyanin. The polypeptide is Photosystem I P700 chlorophyll a apoprotein A1 (Arabis hirsuta (Hairy rock-cress)).